We begin with the raw amino-acid sequence, 195 residues long: Sec-independent protein translocase protein TatB (195 aa).

The chain crosses the membrane as a helical span at residues 1-21 (MFDIGFSELALIAVVALVVLG). The tract at residues 130-195 (EPGSAQPHTP…SSTSPQEKTP (66 aa)) is disordered. Composition is skewed to low complexity over residues 145-157 (PVVA…APAP) and 175-195 (TTHA…EKTP).

Belongs to the TatB family. The Tat system comprises two distinct complexes: a TatABC complex, containing multiple copies of TatA, TatB and TatC subunits, and a separate TatA complex, containing only TatA subunits. Substrates initially bind to the TatABC complex, which probably triggers association of the separate TatA complex to form the active translocon.

It localises to the cell inner membrane. Functionally, part of the twin-arginine translocation (Tat) system that transports large folded proteins containing a characteristic twin-arginine motif in their signal peptide across membranes. Together with TatC, TatB is part of a receptor directly interacting with Tat signal peptides. TatB may form an oligomeric binding site that transiently accommodates folded Tat precursor proteins before their translocation. The protein is Sec-independent protein translocase protein TatB of Xanthomonas campestris pv. campestris (strain 8004).